Consider the following 132-residue polypeptide: Agouti-signaling protein (132 aa).

A signal peptide spans 1-22 (MDVTRLLLATLLVFLCFFTAYS). N-linked (GlcNAc...) asparagine glycosylation occurs at N39. Residues 58–88 (KSKQMSRKEAEKKRSSKKEASMKKVARPRTP) form a disordered region. The segment covering 63–79 (SRKEAEKKRSSKKEASM) has biased composition (basic and acidic residues). 5 cysteine pairs are disulfide-bonded: C93–C108, C100–C114, C107–C125, C111–C132, and C116–C123. Residues 93-132 (CVATRDSCKPPAPACCDPCASCQCRFFRSACSCRVLSLNC) form the Agouti domain.

It is found in the secreted. In terms of biological role, involved in the regulation of melanogenesis. The binding of ASP to MC1R precludes alpha-MSH initiated signaling and thus blocks production of cAMP, leading to a down-regulation of eumelanogenesis (brown/black pigment) and thus increasing synthesis of pheomelanin (yellow/red pigment). In Cercopithecus mitis (Blue monkey), this protein is Agouti-signaling protein (ASIP).